Reading from the N-terminus, the 142-residue chain is MFDFGFSELVVIGVVMLIVVGPERLPKVARTAGHLLGRLQRYVSDVKSDIQREMQLEELKKLQQQVQQQAQALESSVRTEVAQVESSVDQVVAAIKADAAPPDNTTSAESQAAADPAAVDSSQQLELRLDTTPKQVVGSDKA.

A helical transmembrane segment spans residues 1-21 (MFDFGFSELVVIGVVMLIVVG). The disordered stretch occupies residues 99-142 (AAPPDNTTSAESQAAADPAAVDSSQQLELRLDTTPKQVVGSDKA). Residues 107 to 124 (SAESQAAADPAAVDSSQQ) show a composition bias toward low complexity.

Belongs to the TatB family. As to quaternary structure, the Tat system comprises two distinct complexes: a TatABC complex, containing multiple copies of TatA, TatB and TatC subunits, and a separate TatA complex, containing only TatA subunits. Substrates initially bind to the TatABC complex, which probably triggers association of the separate TatA complex to form the active translocon.

It is found in the cell inner membrane. In terms of biological role, part of the twin-arginine translocation (Tat) system that transports large folded proteins containing a characteristic twin-arginine motif in their signal peptide across membranes. Together with TatC, TatB is part of a receptor directly interacting with Tat signal peptides. TatB may form an oligomeric binding site that transiently accommodates folded Tat precursor proteins before their translocation. This chain is Sec-independent protein translocase protein TatB, found in Azoarcus sp. (strain BH72).